A 364-amino-acid chain; its full sequence is D-alanine--D-alanine ligase (364 aa).

The 207-residue stretch at 140–346 (KKLALLEGIP…YSQLIDKLIS (207 aa)) folds into the ATP-grasp domain. 173–228 (ESEFSYPVFVKPANSGSSVGISKAKDREDLVLAIHEAFLYDTKILIEQAINAREIE) provides a ligand contact to ATP. Residues aspartate 299, glutamate 313, and asparagine 315 each coordinate Mg(2+).

This sequence belongs to the D-alanine--D-alanine ligase family. Mg(2+) serves as cofactor. Mn(2+) is required as a cofactor.

The protein localises to the cytoplasm. The catalysed reaction is 2 D-alanine + ATP = D-alanyl-D-alanine + ADP + phosphate + H(+). It participates in cell wall biogenesis; peptidoglycan biosynthesis. In terms of biological role, cell wall formation. The polypeptide is D-alanine--D-alanine ligase (Caldicellulosiruptor bescii (strain ATCC BAA-1888 / DSM 6725 / KCTC 15123 / Z-1320) (Anaerocellum thermophilum)).